Here is a 102-residue protein sequence, read N- to C-terminus: Small ribosomal subunit protein uS10 (102 aa).

Belongs to the universal ribosomal protein uS10 family. As to quaternary structure, part of the 30S ribosomal subunit.

Its function is as follows. Involved in the binding of tRNA to the ribosomes. The protein is Small ribosomal subunit protein uS10 of Chlorobium phaeobacteroides (strain BS1).